The following is a 549-amino-acid chain: MKNINPTQTSAWQALQKHYDEMKDVTIAELFANDSDRFAKFSATFDDLMLVDFSKNRITEETLAKLQDLAKETDLAGAIKSMFSGEKINRTEDRAVLHVALRNRSNTPIIVDGKDVMPEVNAVLEKMKTFSQAIISGQWKGYTGKAITDVVNIGIGGSDLGPFMVTEALRPYKNHLTMHFVSNVDGTHIAEVLKKVNPETTLFLVASKTFTTQETMTNAHSARDWFLKSAGDEKHVAKHFAALSTNAKAVGEFGIDTANMFEFWDWVGGRYSLWSAIGLSIILSVGFDNFVELLSGAHAMDKHFSTTPAEKNLPILLALIGIWYNNFFGAETEAILPYDQYMHRFAAYFQQGNMESNGKYVDRNGNAVDYQTGPIIWGEPGTNGQHAFYQLIHQGTKMVPCDFIAPAITHNPLSDHHQKLLSNFFAQTEALAFGKSREVVEQEYRDQGKDPAQLEHVVPFKVFEGNRPTNSILLREITPFSLGALIALYEHKIFTQGVILNIFTFDQWGVELGKQLANRILPELGDDKAISSHDSSTNGLINRYKAWRA.

Glu355 acts as the Proton donor in catalysis. Active-site residues include His386 and Lys514.

This sequence belongs to the GPI family.

The protein localises to the cytoplasm. It carries out the reaction alpha-D-glucose 6-phosphate = beta-D-fructose 6-phosphate. The protein operates within carbohydrate biosynthesis; gluconeogenesis. It functions in the pathway carbohydrate degradation; glycolysis; D-glyceraldehyde 3-phosphate and glycerone phosphate from D-glucose: step 2/4. Catalyzes the reversible isomerization of glucose-6-phosphate to fructose-6-phosphate. The protein is Glucose-6-phosphate isomerase of Salmonella typhi.